We begin with the raw amino-acid sequence, 270 residues long: DNA repair protein RecO (270 aa).

A disordered region spans residues 202-221 (PELPPSTIDADTDNPSQPPS).

The protein belongs to the RecO family.

Involved in DNA repair and RecF pathway recombination. This chain is DNA repair protein RecO, found in Rhodopirellula baltica (strain DSM 10527 / NCIMB 13988 / SH1).